The sequence spans 79 residues: Short neurotoxin 2 (79 aa).

The first 21 residues, 1–21, serve as a signal peptide directing secretion; the sequence is MKTLLLTLVMVTIMCLDLGYT. Disulfide bonds link Cys24–Cys41, Cys34–Cys59, Cys63–Cys71, and Cys72–Cys77.

Belongs to the three-finger toxin family. Short-chain subfamily. Type III alpha-neurotoxin sub-subfamily. As to expression, expressed by the venom gland.

The protein resides in the secreted. In terms of biological role, binds with high affinity to muscle nicotinic acetylcholine receptor (nAChR) and hinders acetylcholine binding to the receptor, thereby impairing neuromuscular transmission. Competes with the binding of alpha-bungarotoxin on muscle AChR (from Torpedo) with an IC(50) of 0.30 uM. Causes muscle paralysis, spasms and increased respiration. The chain is Short neurotoxin 2 from Pseudonaja textilis (Eastern brown snake).